The following is a 737-amino-acid chain: Procollagen-lysine,2-oxoglutarate 5-dioxygenase 2 (737 aa).

Residues 1–25 (MGDRGARPGRLMPMLALLSWAAGLG) form the signal peptide. 2 N-linked (GlcNAc...) asparagine glycosylation sites follow: asparagine 63 and asparagine 209. Threonine 320 carries the post-translational modification Phosphothreonine. Tyrosine 323 bears the Phosphotyrosine mark. 2 N-linked (GlcNAc...) asparagine glycosylation sites follow: asparagine 365 and asparagine 522. The region spanning 644-737 (KGFALLNFVV…RYIAVSFIDP (94 aa)) is the Fe2OG dioxygenase domain. Fe cation contacts are provided by histidine 666 and aspartate 668. Asparagine 696 carries N-linked (GlcNAc...) asparagine glycosylation. Residue lysine 704 is modified to N6-succinyllysine. Histidine 718 is a Fe cation binding site. Asparagine 725 carries N-linked (GlcNAc...) asparagine glycosylation. Arginine 728 is an active-site residue.

As to quaternary structure, homodimer. Requires Fe(2+) as cofactor. L-ascorbate is required as a cofactor. As to expression, is highly expressed in the heart, lung, kidney, eye, ovary and placenta.

It is found in the rough endoplasmic reticulum membrane. The catalysed reaction is L-lysyl-[collagen] + 2-oxoglutarate + O2 = (5R)-5-hydroxy-L-lysyl-[collagen] + succinate + CO2. In terms of biological role, forms hydroxylysine residues in -Xaa-Lys-Gly- sequences in collagens. These hydroxylysines serve as sites of attachment for carbohydrate units and are essential for the stability of the intermolecular collagen cross-links. This Mus musculus (Mouse) protein is Procollagen-lysine,2-oxoglutarate 5-dioxygenase 2 (Plod2).